The chain runs to 1463 residues: Kinesin-like protein KIF15 (1463 aa).

In terms of domain architecture, Kinesin motor spans 18 to 354; it reads AIKVFVRVRP…LKFARRAKMI (337 aa). 99 to 106 is a binding site for ATP; the sequence is GQTGSGKT. The tract at residues 387-424 is disordered; sequence AEGSIPRGPSESGDSQMSNSSTESNGPVSGQQSGSSSS. Over residues 398–414 the composition is skewed to polar residues; it reads SGDSQMSNSSTESNGPV. A compositionally biased stretch (low complexity) spans 415-424; sequence SGQQSGSSSS. 2 coiled-coil regions span residues 436-517 and 586-646; these read SLRD…LEHN and TSTL…QGMK. Disordered stretches follow at residues 686-720, 1335-1356, and 1409-1444; these read AGEETPGGPGFAGLSDNGSPLRSHSTNSLPPSGDI, FKEKEDIKSKLEEEREEKSKLT, and QLGKAQSDSEQMKRDYEALQKRLTSSSAEPPEEAGA. The span at 701–715 shows a compositional bias: polar residues; the sequence is DNGSPLRSHSTNSLP. Residues 1418-1428 are compositionally biased toward basic and acidic residues; that stretch reads EQMKRDYEALQ.

The protein belongs to the TRAFAC class myosin-kinesin ATPase superfamily. Kinesin family. KLP2 subfamily. In terms of assembly, homodimer.

It is found in the cytoplasm. Its subcellular location is the cytoskeleton. The protein resides in the spindle. Functionally, plus-end directed kinesin-like motor enzyme involved in mitotic spindle assembly. Plays a role in positioning spindle poles during mitosis, specifically at prometaphase. The sequence is that of Kinesin-like protein KIF15 (KIF15) from Strongylocentrotus purpuratus (Purple sea urchin).